A 357-amino-acid chain; its full sequence is 3-dehydroquinate synthase (357 aa).

Residues Gly-104–Asp-108, Thr-128–Thr-129, Lys-141, and Phe-168–Thr-171 contribute to the NAD(+) site. Zn(2+)-binding residues include Glu-183, His-243, and His-260.

The protein belongs to the sugar phosphate cyclases superfamily. Dehydroquinate synthase family. Co(2+) serves as cofactor. Requires Zn(2+) as cofactor. It depends on NAD(+) as a cofactor.

It is found in the cytoplasm. The enzyme catalyses 7-phospho-2-dehydro-3-deoxy-D-arabino-heptonate = 3-dehydroquinate + phosphate. It functions in the pathway metabolic intermediate biosynthesis; chorismate biosynthesis; chorismate from D-erythrose 4-phosphate and phosphoenolpyruvate: step 2/7. In terms of biological role, catalyzes the conversion of 3-deoxy-D-arabino-heptulosonate 7-phosphate (DAHP) to dehydroquinate (DHQ). In Streptococcus pyogenes serotype M5 (strain Manfredo), this protein is 3-dehydroquinate synthase.